A 307-amino-acid chain; its full sequence is MTKTIGLLVMAYGTPYKESDIEPYYTDIRRGKKPTEEELQDLKDRYEFIGGLSPLAGTTDRQAEALLEALNKEQDDVNFKLYIGLKHISPYIEEAVEQMHNDGIKEAVTVVLAPHYSSFSVGSYDQRAQEKADEYGIQLTHIKHYYQQPKFIKYWTEKINETLEQIPNQEHDETVLVVSAHSLPKGLIERNNDPYPHELHETAEILKQESNIIHVAEGWQSEGNTGTPWLGPDVQDLTRDLYKEHQFKHFIYTPVGFVCEHLEVLYDNDYECKVVCDDIGVNYYRPEMPNTHPLFIGAIVDEIQSHI.

Residues Tyr-12, Arg-29, 45 to 46 (RY), Ser-53, and Tyr-124 contribute to the Fe-coproporphyrin III site. The Fe(2+) site is built by His-181 and Glu-263.

This sequence belongs to the ferrochelatase family.

It is found in the cytoplasm. It catalyses the reaction Fe-coproporphyrin III + 2 H(+) = coproporphyrin III + Fe(2+). It participates in porphyrin-containing compound metabolism; protoheme biosynthesis. Its function is as follows. Involved in coproporphyrin-dependent heme b biosynthesis. Catalyzes the insertion of ferrous iron into coproporphyrin III to form Fe-coproporphyrin III. The chain is Coproporphyrin III ferrochelatase from Staphylococcus epidermidis (strain ATCC 12228 / FDA PCI 1200).